A 113-amino-acid polypeptide reads, in one-letter code: Endoribonuclease SymE (113 aa).

The SpoVT-AbrB domain maps to 29–74 (SRYPDYSRIPAITLKGQWLEAAGFATGTAVVVKVMEGCIVLTAQPA).

Belongs to the SymE family.

Its subcellular location is the cytoplasm. Its function is as follows. Involved in the degradation and recycling of damaged RNA. It is itself a target for degradation by the ATP-dependent protease Lon. The chain is Endoribonuclease SymE from Escherichia coli (strain ATCC 8739 / DSM 1576 / NBRC 3972 / NCIMB 8545 / WDCM 00012 / Crooks).